The primary structure comprises 787 residues: MQAFGPPNEGPLQGLVASRIETYGGRHQTSAHSTAGNLFPRGGPGVDPSRRRLQHYVPFAKGSGQTRGMSPLVLREPDPEKRHGSYFGVGPPHSPKLKEVTRAHELEIRLHTFSMFGMPRLPPEDRRHWEIGEGGDSALTMEKSWKELVLEHKEMNRQLCHQQEALWELLTTELIYLRKLKIMTDLLAAGLLNLQRVGLLTEVSAETLFGNVPNLIRAHRRFWEEVLQPILEDTRTSGQPLDPVSLQNGFLTFGQRFQPYVQYCLRVKQTMAYAREQQDTNPLFHTFVQWCEKHKRSGRQTLGDLLIKPHQRITKYPLLLQAVRKRSPEPRAQEALNAMIEAVESFLRHINGQVRQGEEQESLMAVAQRIGPYEVLEPSSEEVEKNLRPFSTLDLMTPVLGVAPEYTRQLLLEGPVRVKEGREGKMDVYLFLFSDVLLVTKPQRKADRAKVIRPPLMLEKLVCRPLRDPNSFLLIHLTEFQCVSSALTVHCPSSTERARWLEKTQHAQTTLQKLKGEQYIQQKRELLALYRNQGTESPSTRPSTPSPSPEDSQSSAEGRTLEFAIIPRLVVTEDTDEDTPSMPDDASDSGYGTLIPSSPKDSHSPLNRLRSKALRRDPRLTFSTLELRDVPLRPQPPDPQAPQRRSAPELPEGILRGGSLPRRAPPIWSEEEDETLASGNVVVETLHRAQRRSPLPHSPTHTDSAGESPWESSDEDEGLLSPELRPRSLREDMLREIREELANQRIDGASEPEPGNGKPRRLTLAQLQRMRVPHIIQLDTPLSTSEV.

Positions 161 to 353 (HQQEALWELL…ESFLRHINGQ (193 aa)) constitute a DH domain. One can recognise a PH domain in the interval 409–509 (QLLLEGPVRV…WLEKTQHAQT (101 aa)). The tract at residues 533–762 (QGTESPSTRP…EPGNGKPRRL (230 aa)) is disordered. Positions 535–557 (TESPSTRPSTPSPSPEDSQSSAE) are enriched in low complexity. Residues 724–742 (LRPRSLREDMLREIREELA) show a composition bias toward basic and acidic residues.

In terms of assembly, interacts with MYH10. Interacts with ELMO1 and EZR (in an open conformation). Interacts with CSPP1.

It localises to the cell projection. The protein localises to the microvillus. It is found in the cytoplasm. The protein resides in the cytoskeleton. Its subcellular location is the spindle. It localises to the cleavage furrow. Functionally, guanine nucleotide exchange factor activating the small GTPase RHOA, which, in turn, induces myosin filament formation. Also activates RHOG. Does not activate RAC1, or to a much lower extent than RHOA and RHOG. Part of a functional unit, involving PLEKHG6, MYH10 and RHOA, at the cleavage furrow to advance furrow ingression during cytokinesis. In epithelial cells, required for the formation of microvilli and membrane ruffles on the apical pole. Along with EZR, required for normal macropinocytosis. The protein is Pleckstrin homology domain-containing family G member 6 (Plekhg6) of Mus musculus (Mouse).